The following is a 499-amino-acid chain: Guanosine-5'-triphosphate,3'-diphosphate pyrophosphatase (499 aa).

Belongs to the GppA/Ppx family. GppA subfamily.

The catalysed reaction is guanosine 3'-diphosphate 5'-triphosphate + H2O = guanosine 3',5'-bis(diphosphate) + phosphate + H(+). Its pathway is purine metabolism; ppGpp biosynthesis; ppGpp from GTP: step 2/2. Catalyzes the conversion of pppGpp to ppGpp. Guanosine pentaphosphate (pppGpp) is a cytoplasmic signaling molecule which together with ppGpp controls the 'stringent response', an adaptive process that allows bacteria to respond to amino acid starvation, resulting in the coordinated regulation of numerous cellular activities. The polypeptide is Guanosine-5'-triphosphate,3'-diphosphate pyrophosphatase (Klebsiella pneumoniae (strain 342)).